We begin with the raw amino-acid sequence, 451 residues long: Phosphoglucosamine mutase (451 aa).

Catalysis depends on S101, which acts as the Phosphoserine intermediate. Positions 101, 240, 242, and 244 each coordinate Mg(2+). S101 carries the post-translational modification Phosphoserine.

Belongs to the phosphohexose mutase family. Requires Mg(2+) as cofactor. In terms of processing, activated by phosphorylation.

It carries out the reaction alpha-D-glucosamine 1-phosphate = D-glucosamine 6-phosphate. Functionally, catalyzes the conversion of glucosamine-6-phosphate to glucosamine-1-phosphate. This Alkalilimnicola ehrlichii (strain ATCC BAA-1101 / DSM 17681 / MLHE-1) protein is Phosphoglucosamine mutase.